A 559-amino-acid polypeptide reads, in one-letter code: Myb/SANT-like DNA-binding domain-containing protein 2 (559 aa).

The segment at 1 to 62 (MAAPCGSELP…GSAAGSGAAA (62 aa)) is disordered. Residues S13, S24, S27, S32, and S48 each carry the phosphoserine modification. The segment covering 46-61 (GASPLGPGSAAGSGAA) has biased composition (low complexity). The 71-residue stretch at 103 to 173 (SWTPAETNAL…QCRERIKTLR (71 aa)) folds into the Myb-like domain. Residues K268 and K343 each participate in a glycyl lysine isopeptide (Lys-Gly) (interchain with G-Cter in SUMO2) cross-link. Position 436 is a phosphoserine (S436).

The chain is Myb/SANT-like DNA-binding domain-containing protein 2 (Msantd2) from Mus musculus (Mouse).